Reading from the N-terminus, the 144-residue chain is Giant hemoglobins B chain (144 aa).

The Globin domain maps to 3-144 (VCGPLQRLKV…LNVITNGIQG (142 aa)). Heme b is bound at residue His-96.

It belongs to the globin family. As to quaternary structure, part of giant hemoglobin C1, V1 and V2. This worm has three different extracellular Hbs: two dissolved in the vascular blood, V1 (CA. 3,500 kDa) and V2 (CA. 400 kDa), and one in the coelomic fluid, C1 (CA. 400 kDa). V1 consists of four heme-containing, globin chains (B-E) and four linker chains (L1-L4). V2 consists of six globin chains (A-F) and C1 consists of five globin chains (A-E).

Its subcellular location is the secreted. It is found in the extracellular space. The sequence is that of Giant hemoglobins B chain from Riftia pachyptila (Vent tube worm).